The sequence spans 446 residues: Sensor-type histidine kinase PrrB (446 aa).

The next 2 helical transmembrane spans lie at 19 to 39 (VVATAIGAAIPVLIVGTVVWV) and 151 to 171 (LLICGFAIAAAAVFAWLLAAF). The HAMP domain maps to 172–222 (AVRPFKQLAQQTRSVDAGGEAPRVEVHGATEAVEIAEAMRGMLQRIWNEQN). Positions 237 to 446 (VSSHELRTPL…RLLLRISAPS (210 aa)) constitute a Histidine kinase domain. Residue histidine 240 is modified to Phosphohistidine; by autocatalysis.

Autophosphorylated.

The protein resides in the cell membrane. The enzyme catalyses ATP + protein L-histidine = ADP + protein N-phospho-L-histidine.. Member of the two-component regulatory system PrrB/PrrA that is involved specifically in early intracellular multiplication of Mycobacterium and is essential for its viability. Functions as a sensor protein kinase which is autophosphorylated at a histidine residue and transfers its phosphate group to the conserved aspartic acid residue in the regulatory domain of PrrA. In turn, PrrA binds to the upstream promoter regions of target genes including itself to positively regulate their expression. The protein is Sensor-type histidine kinase PrrB (prrB) of Mycobacterium leprae (strain TN).